The chain runs to 202 residues: Imidazoleglycerol-phosphate dehydratase (202 aa).

This sequence belongs to the imidazoleglycerol-phosphate dehydratase family.

The protein localises to the cytoplasm. It carries out the reaction D-erythro-1-(imidazol-4-yl)glycerol 3-phosphate = 3-(imidazol-4-yl)-2-oxopropyl phosphate + H2O. It functions in the pathway amino-acid biosynthesis; L-histidine biosynthesis; L-histidine from 5-phospho-alpha-D-ribose 1-diphosphate: step 6/9. The polypeptide is Imidazoleglycerol-phosphate dehydratase (Rhizobium meliloti (strain 1021) (Ensifer meliloti)).